The following is a 1157-amino-acid chain: ATP-dependent helicase/deoxyribonuclease subunit B (1157 aa).

Positions 1–275 (MTLHAYLGRA…QYFNQLYRFN (275 aa)) constitute a UvrD-like helicase ATP-binding domain. 8–15 (GRAGTGKS) provides a ligand contact to ATP. A UvrD-like helicase C-terminal domain is found at 269–583 (NQLYRFNNQD…SIGTMDLAKV (315 aa)). The [4Fe-4S] cluster site is built by cysteine 784, cysteine 1112, cysteine 1115, and cysteine 1121.

The protein belongs to the helicase family. AddB/RexB type 1 subfamily. Heterodimer of AddA and AddB. Mg(2+) is required as a cofactor. [4Fe-4S] cluster serves as cofactor.

In terms of biological role, the heterodimer acts as both an ATP-dependent DNA helicase and an ATP-dependent, dual-direction single-stranded exonuclease. Recognizes the chi site generating a DNA molecule suitable for the initiation of homologous recombination. The AddB subunit has 5' -&gt; 3' nuclease activity but not helicase activity. This is ATP-dependent helicase/deoxyribonuclease subunit B from Staphylococcus aureus (strain JH9).